Reading from the N-terminus, the 113-residue chain is Large ribosomal subunit protein eL33 (113 aa).

This sequence belongs to the eukaryotic ribosomal protein eL33 family.

The protein is Large ribosomal subunit protein eL33 (RPL35A) of Tetrahymena thermophila (strain SB210).